The sequence spans 359 residues: Peptide chain release factor 1 (359 aa).

Q235 bears the N5-methylglutamine mark. A disordered region spans residues 280 to 306; the sequence is AERQRADSERSADRKSQVGSGDRSERI.

This sequence belongs to the prokaryotic/mitochondrial release factor family. Post-translationally, methylated by PrmC. Methylation increases the termination efficiency of RF1.

Its subcellular location is the cytoplasm. Functionally, peptide chain release factor 1 directs the termination of translation in response to the peptide chain termination codons UAG and UAA. The chain is Peptide chain release factor 1 from Rhizobium leguminosarum bv. trifolii (strain WSM2304).